A 166-amino-acid polypeptide reads, in one-letter code: Protein-export protein SecB (166 aa).

This sequence belongs to the SecB family. Homotetramer, a dimer of dimers. One homotetramer interacts with 1 SecA dimer.

It is found in the cytoplasm. Functionally, one of the proteins required for the normal export of preproteins out of the cell cytoplasm. It is a molecular chaperone that binds to a subset of precursor proteins, maintaining them in a translocation-competent state. It also specifically binds to its receptor SecA. This chain is Protein-export protein SecB, found in Cereibacter sphaeroides (strain ATCC 17025 / ATH 2.4.3) (Rhodobacter sphaeroides).